The primary structure comprises 208 residues: Small ribosomal subunit protein bS6 (208 aa).

Disordered stretches follow at residues 121-143 and 185-208; these read SENNPDNPDAPVTSGLASVKPRL and NQQTSQANNNQPRFQNQFKKGAKP. Positions 185 to 195 are enriched in low complexity; that stretch reads NQQTSQANNNQ.

Belongs to the bacterial ribosomal protein bS6 family.

Functionally, binds together with bS18 to 16S ribosomal RNA. In Mycoplasma genitalium (strain ATCC 33530 / DSM 19775 / NCTC 10195 / G37) (Mycoplasmoides genitalium), this protein is Small ribosomal subunit protein bS6 (rpsF).